Consider the following 395-residue polypeptide: Chalcone synthase (395 aa).

The active site involves Cys164.

This sequence belongs to the thiolase-like superfamily. Chalcone/stilbene synthases family.

It catalyses the reaction (E)-4-coumaroyl-CoA + 3 malonyl-CoA + 3 H(+) = 2',4,4',6'-tetrahydroxychalcone + 3 CO2 + 4 CoA. It participates in secondary metabolite biosynthesis; flavonoid biosynthesis. The primary product of this enzyme is 4,2',4',6'-tetrahydroxychalcone (also termed naringenin-chalcone or chalcone) which can under specific conditions spontaneously isomerize into naringenin. The sequence is that of Chalcone synthase (CHS) from Betula pendula (European white birch).